Consider the following 321-residue polypeptide: Hydropyrene synthase (321 aa).

The Mg(2+) site is built by Asp-82, Asn-225, Ser-229, and Glu-233. Positions 82 to 87 match the DDxx(x)D/E motif motif; that stretch reads DDRAID. The NDxxSxxxD/E motif signature appears at 225-233; the sequence is NDLHSFARE.

The protein belongs to the terpene synthase family. It depends on Mg(2+) as a cofactor.

It catalyses the reaction (2E,6E,10E)-geranylgeranyl diphosphate = hydropyrene + diphosphate. The enzyme catalyses (2E,6E,10E)-geranylgeranyl diphosphate + H2O = hydropyrenol + diphosphate. The catalysed reaction is (2E,6E,10E)-geranylgeranyl diphosphate = isoelisabethatriene + diphosphate. It participates in secondary metabolite biosynthesis; terpenoid biosynthesis. Functionally, terpene synthase that catalyzes the conversion of geranylgeranyl diphosphate (GGPP) into a mixture of diterpenes, including hydropyrene (HP), hydropyrenol (HPol), isoelisabethatriene and traces of isoelisabethatriene B. Hydropyrene is the main product. Some other diterpenoids are also produced in very low quantities. The sequence is that of Hydropyrene synthase from Streptomyces clavuligerus.